The primary structure comprises 732 residues: Probable boron transporter 3 (732 aa).

Residue Met1 is modified to N-acetylmethionine. Residues 1 to 37 (MDEAESFVPFQGIKKDVKGRLNCYKQDWISGLRAGFR) lie on the Cytoplasmic side of the membrane. A helical transmembrane segment spans residues 38–58 (ILAPTTYIFFASAIPVITFGE). Residues 59-77 (QLERDTDGKITAVQTLVST) lie on the Extracellular side of the membrane. A helical membrane pass occupies residues 78–98 (ALCGVIHSIIGGQPLLILGVA). At 99-123 (EPTVIMYTFMFNFAKSRTDLGSNLF) the chain is on the cytoplasmic side. The helical transmembrane segment at 124-144 (LAWTGWVCLWTGLLLFLLAVL) threads the bilayer. Topologically, residues 145–157 (GACTFINRFTRLA) are extracellular. The helical transmembrane segment at 158 to 178 (GELFGILIAMLFMQEAIRGIV) threads the bilayer. Over 179–197 (DEFGVPGRTNPRSAEFQPA) the chain is Cytoplasmic. Residues 198–218 (WVFANGMFGLVLSSGLLYTGL) form a helical membrane-spanning segment. Topologically, residues 219-234 (KSRKARSWRFGAEWLR) are extracellular. Residues 235–255 (GFIADYGVPVMVVVWTCISYI) form a helical membrane-spanning segment. The Cytoplasmic segment spans residues 256–291 (PWKSVPQGIPRRLVSPNPWSPGAYQNWTVIKEMVDV). The helical transmembrane segment at 292-312 (PVLYILLAVVPASMIAVLYYF) threads the bilayer. Residues 313 to 339 (DHSVASQLAQQEDFNLRKPPAYHYDLF) lie on the Extracellular side of the membrane. The chain crosses the membrane as a helical span at residues 340-360 (LLGFLTILCGLIGIPPSNGVI). Topologically, residues 361 to 463 (PQSPMHTKSL…ILPVEVKEQR (103 aa)) are cytoplasmic. The chain crosses the membrane as a helical span at residues 464-484 (VSNFLQAMMVAGCVAAMPLIK). Over 485–556 (RIPSSVLWGY…LFQTAYLLVC (72 aa)) the chain is Extracellular. A helical membrane pass occupies residues 557–577 (FGITWVPVAGVLFPLMIMFLV). The Cytoplasmic segment spans residues 578 to 732 (PVRQYVLPNF…QRLSNLGKSV (155 aa)). The tract at residues 695-732 (GGGEISPRSSAGRAPFSPRSATGGGGGEQRLSNLGKSV) is disordered.

This sequence belongs to the anion exchanger (TC 2.A.31.3) family.

It localises to the membrane. In terms of biological role, probable boron transporter. Boron is essential for maintaining the integrity of plants cell walls. In Arabidopsis thaliana (Mouse-ear cress), this protein is Probable boron transporter 3 (BOR3).